A 361-amino-acid polypeptide reads, in one-letter code: Flagellar P-ring protein (361 aa).

A signal peptide spans 1-18 (MRKFTILLMLLLASSAQA).

It belongs to the FlgI family. In terms of assembly, the basal body constitutes a major portion of the flagellar organelle and consists of four rings (L,P,S, and M) mounted on a central rod.

The protein localises to the periplasm. It localises to the bacterial flagellum basal body. Functionally, assembles around the rod to form the L-ring and probably protects the motor/basal body from shearing forces during rotation. This Vibrio cholerae serotype O1 (strain ATCC 39541 / Classical Ogawa 395 / O395) protein is Flagellar P-ring protein.